We begin with the raw amino-acid sequence, 402 residues long: DNA replication and repair protein RecF (402 aa).

Residue 30–37 participates in ATP binding; the sequence is GYNGIGKT.

It belongs to the RecF family.

The protein resides in the cytoplasm. In terms of biological role, the RecF protein is involved in DNA metabolism; it is required for DNA replication and normal SOS inducibility. RecF binds preferentially to single-stranded, linear DNA. It also seems to bind ATP. The chain is DNA replication and repair protein RecF from Pseudarthrobacter chlorophenolicus (strain ATCC 700700 / DSM 12829 / CIP 107037 / JCM 12360 / KCTC 9906 / NCIMB 13794 / A6) (Arthrobacter chlorophenolicus).